The chain runs to 391 residues: Dual-specificity RNA methyltransferase RlmN (391 aa).

The active-site Proton acceptor is the glutamate 115. Positions 121-363 (EENRGTLCIS…SPIRTPRGED (243 aa)) constitute a Radical SAM core domain. Cysteine 128 and cysteine 368 form a disulfide bridge. The [4Fe-4S] cluster site is built by cysteine 135, cysteine 139, and cysteine 142. S-adenosyl-L-methionine is bound by residues 194–195 (GE), serine 226, 248–250 (SFH), and asparagine 325. The S-methylcysteine intermediate role is filled by cysteine 368.

The protein belongs to the radical SAM superfamily. RlmN family. The cofactor is [4Fe-4S] cluster.

It localises to the cytoplasm. It catalyses the reaction adenosine(2503) in 23S rRNA + 2 reduced [2Fe-2S]-[ferredoxin] + 2 S-adenosyl-L-methionine = 2-methyladenosine(2503) in 23S rRNA + 5'-deoxyadenosine + L-methionine + 2 oxidized [2Fe-2S]-[ferredoxin] + S-adenosyl-L-homocysteine. It carries out the reaction adenosine(37) in tRNA + 2 reduced [2Fe-2S]-[ferredoxin] + 2 S-adenosyl-L-methionine = 2-methyladenosine(37) in tRNA + 5'-deoxyadenosine + L-methionine + 2 oxidized [2Fe-2S]-[ferredoxin] + S-adenosyl-L-homocysteine. Specifically methylates position 2 of adenine 2503 in 23S rRNA and position 2 of adenine 37 in tRNAs. m2A2503 modification seems to play a crucial role in the proofreading step occurring at the peptidyl transferase center and thus would serve to optimize ribosomal fidelity. The chain is Dual-specificity RNA methyltransferase RlmN from Paracoccus denitrificans (strain Pd 1222).